Reading from the N-terminus, the 64-residue chain is Large ribosomal subunit protein bL28 (64 aa).

The protein belongs to the bacterial ribosomal protein bL28 family.

This is Large ribosomal subunit protein bL28 from Trichlorobacter lovleyi (strain ATCC BAA-1151 / DSM 17278 / SZ) (Geobacter lovleyi).